A 337-amino-acid polypeptide reads, in one-letter code: Cytoskeleton protein RodZ (337 aa).

The Cytoplasmic segment spans residues 1–111 (MNTEATHDQN…LGKRRKKRDG (111 aa)). Positions 19-71 (LRNAREQLGLSQQAVAERLCLKVSTVRDIEEDKAPADLASTFLRGYIRSYARL) constitute an HTH cro/C1-type domain. The H-T-H motif DNA-binding region spans 30 to 49 (QQAVAERLCLKVSTVRDIEE). Residues 112 to 132 (WLMTFTWLVLFVVIGLSGAWW) form a helical; Signal-anchor for type II membrane protein membrane-spanning segment. At 133–337 (WQDHKAQQEE…TLNAEQSPAQ (205 aa)) the chain is on the periplasmic side. The span at 145–167 (TMADQSSAELSSNSEQGQSVPLN) shows a compositional bias: polar residues. Residues 145–237 (TMADQSSAEL…ATTTPDGAAP (93 aa)) form a disordered region. The span at 168 to 207 (TSTTTDPATTSTPPASVDTTATNTQTPAVTAPAPAVDPQQ) shows a compositional bias: low complexity. Over residues 208 to 218 (NAVVSPSQANV) the composition is skewed to polar residues. Residues 219-237 (DTAATPAPTATTTPDGAAP) show a composition bias toward low complexity.

This sequence belongs to the RodZ family.

The protein resides in the cell inner membrane. Cytoskeletal protein that is involved in cell-shape control through regulation of the length of the long axis. The polypeptide is Cytoskeleton protein RodZ (Escherichia coli (strain 55989 / EAEC)).